We begin with the raw amino-acid sequence, 284 residues long: MSSAIINGKEIGQEIRNAVAERVIRLKEQGLTPGLAVVLVGDNQASATYVRNKQKSCEAIGMYSELIKLPEETKQEELLTQIQQLNQREDIHGILVQLPLPKHIDEDTVIATIAVEKDVDGFSPVSVGKMMLGQETFLPCTPFGVMKLLEYSGIEIAGKHAVIVGRSHIVGKPMGQLLLQKDATVTYTHSKTPDLPSFTKQADILIAAVGRANFITKEHVKEGAVVIDVGINRDDNNKLCGDVNFAEVDGIASHITPVPGGVGPMTITMLLFNTVQAAENKLAN.

Residues 165-167, Ser190, and Ile231 contribute to the NADP(+) site; that span reads GRS.

Belongs to the tetrahydrofolate dehydrogenase/cyclohydrolase family. Homodimer.

The catalysed reaction is (6R)-5,10-methylene-5,6,7,8-tetrahydrofolate + NADP(+) = (6R)-5,10-methenyltetrahydrofolate + NADPH. It carries out the reaction (6R)-5,10-methenyltetrahydrofolate + H2O = (6R)-10-formyltetrahydrofolate + H(+). Its pathway is one-carbon metabolism; tetrahydrofolate interconversion. Catalyzes the oxidation of 5,10-methylenetetrahydrofolate to 5,10-methenyltetrahydrofolate and then the hydrolysis of 5,10-methenyltetrahydrofolate to 10-formyltetrahydrofolate. The chain is Bifunctional protein FolD from Lysinibacillus sphaericus (strain C3-41).